We begin with the raw amino-acid sequence, 369 residues long: DNA replication and repair protein RecF (369 aa).

30–37 is an ATP binding site; the sequence is GDNAQGKT.

It belongs to the RecF family.

The protein localises to the cytoplasm. Functionally, the RecF protein is involved in DNA metabolism; it is required for DNA replication and normal SOS inducibility. RecF binds preferentially to single-stranded, linear DNA. It also seems to bind ATP. This chain is DNA replication and repair protein RecF, found in Streptococcus equi subsp. equi (strain 4047).